The chain runs to 211 residues: Large ribosomal subunit protein uL3 (211 aa).

It belongs to the universal ribosomal protein uL3 family. As to quaternary structure, part of the 50S ribosomal subunit. Forms a cluster with proteins L14 and L19.

Functionally, one of the primary rRNA binding proteins, it binds directly near the 3'-end of the 23S rRNA, where it nucleates assembly of the 50S subunit. In Geotalea daltonii (strain DSM 22248 / JCM 15807 / FRC-32) (Geobacter daltonii), this protein is Large ribosomal subunit protein uL3.